Here is a 309-residue protein sequence, read N- to C-terminus: Probable WRKY transcription factor 26 (309 aa).

The disordered stretch occupies residues 1-24 (MGSFDRQRAVPKFKTATPSPLPLS). Residues 111-176 (SSNKTSDDGY…YKGSHNHPKP (66 aa)) constitute a DNA-binding region (WRKY 1). Residues C142, C147, H171, and H173 each contribute to the Zn(2+) site. The interval 167–210 (YKGSHNHPKPQSTKRSSSTAIAAHQNSSNGDGKDIGEDETEAKR) is disordered. A compositionally biased stretch (polar residues) spans 175–196 (KPQSTKRSSSTAIAAHQNSSNG). The span at 197 to 210 (DGKDIGEDETEAKR) shows a compositional bias: basic and acidic residues. The segment at residues 228–293 (SDIDILDDGY…YEGKHKHQIP (66 aa)) is a DNA-binding region (WRKY 2). The Zn(2+) site is built by C259, C264, H288, and H290.

Belongs to the WRKY group I family. Interacts with VQ10.

The protein localises to the nucleus. Its function is as follows. Transcription factor. Interacts specifically with the W box (5'-(T)TGAC[CT]-3'), a frequently occurring elicitor-responsive cis-acting element. Functions with WRKY25 and WRKY33 as positive regulator of plant thermotolerance by partially participating in ethylene-response signal transduction pathway. The polypeptide is Probable WRKY transcription factor 26 (WRKY26) (Arabidopsis thaliana (Mouse-ear cress)).